The sequence spans 585 residues: Nitrogen permease regulator 3-like protein (585 aa).

The tract at residues 117–157 is disordered; the sequence is GEWAKRRKPRTTVESNASSSHLVSKPESSHPSTGSFEVKSS. Positions 128-138 are enriched in polar residues; the sequence is TVESNASSSHL. A compositionally biased stretch (low complexity) spans 148-157; it reads STGSFEVKSS.

This sequence belongs to the NPR3 family.

This chain is Nitrogen permease regulator 3-like protein, found in Schizosaccharomyces pombe (strain 972 / ATCC 24843) (Fission yeast).